Here is a 111-residue protein sequence, read N- to C-terminus: Prothymosin alpha-A (111 aa).

Residues 1–111 (MSDTAVDASV…IKKQKTDEDD (111 aa)) form a disordered region. Residues 9-42 (SVEKTTKDLKAKEKEVVEEAENGKDKPTNGKAEN) are compositionally biased toward basic and acidic residues. Composition is skewed to acidic residues over residues 43–81 (EENG…DEVE) and 90–100 (EDDEDDDDDDV). The span at 101-111 (EIKKQKTDEDD) shows a compositional bias: basic and acidic residues.

This sequence belongs to the pro/parathymosin family.

The protein resides in the nucleus. This chain is Prothymosin alpha-A (ptma-a), found in Xenopus laevis (African clawed frog).